A 559-amino-acid chain; its full sequence is Acetolactate synthase, catabolic (559 aa).

FAD-binding positions include Arg-159, 263–284 (FNNQAGDRLLRQADLIICIGYS), and 304–323 (DVLPAYEERNYVPDIELVGD). Asp-447 contributes to the Mg(2+) binding site.

This sequence belongs to the TPP enzyme family. As to quaternary structure, homodimer.

The enzyme catalyses 2 pyruvate + H(+) = (2S)-2-acetolactate + CO2. The protein operates within polyol metabolism; (R,R)-butane-2,3-diol biosynthesis; (R,R)-butane-2,3-diol from pyruvate: step 1/3. This Raoultella terrigena (Klebsiella terrigena) protein is Acetolactate synthase, catabolic (budB).